Reading from the N-terminus, the 212-residue chain is Uracil phosphoribosyltransferase (212 aa).

Residues Arg78, Arg103, and 130–138 each bind 5-phospho-alpha-D-ribose 1-diphosphate; that span reads DPMLATGGS. Uracil contacts are provided by residues Ile193 and 198 to 200; that span reads GDA. Asp199 provides a ligand contact to 5-phospho-alpha-D-ribose 1-diphosphate.

Belongs to the UPRTase family. Mg(2+) is required as a cofactor.

It carries out the reaction UMP + diphosphate = 5-phospho-alpha-D-ribose 1-diphosphate + uracil. It participates in pyrimidine metabolism; UMP biosynthesis via salvage pathway; UMP from uracil: step 1/1. Allosterically activated by GTP. In terms of biological role, catalyzes the conversion of uracil and 5-phospho-alpha-D-ribose 1-diphosphate (PRPP) to UMP and diphosphate. In Pseudomonas entomophila (strain L48), this protein is Uracil phosphoribosyltransferase.